The chain runs to 876 residues: Alanine--tRNA ligase (876 aa).

Zn(2+) contacts are provided by His-568, His-572, Cys-670, and His-674.

The protein belongs to the class-II aminoacyl-tRNA synthetase family. Zn(2+) is required as a cofactor.

It is found in the cytoplasm. The enzyme catalyses tRNA(Ala) + L-alanine + ATP = L-alanyl-tRNA(Ala) + AMP + diphosphate. Functionally, catalyzes the attachment of alanine to tRNA(Ala) in a two-step reaction: alanine is first activated by ATP to form Ala-AMP and then transferred to the acceptor end of tRNA(Ala). Also edits incorrectly charged Ser-tRNA(Ala) and Gly-tRNA(Ala) via its editing domain. In Geobacter metallireducens (strain ATCC 53774 / DSM 7210 / GS-15), this protein is Alanine--tRNA ligase.